The chain runs to 318 residues: Porphobilinogen deaminase (318 aa).

Cys241 carries the S-(dipyrrolylmethanemethyl)cysteine modification.

Belongs to the HMBS family. Monomer. Requires dipyrromethane as cofactor.

It carries out the reaction 4 porphobilinogen + H2O = hydroxymethylbilane + 4 NH4(+). It functions in the pathway porphyrin-containing compound metabolism; protoporphyrin-IX biosynthesis; coproporphyrinogen-III from 5-aminolevulinate: step 2/4. Functionally, tetrapolymerization of the monopyrrole PBG into the hydroxymethylbilane pre-uroporphyrinogen in several discrete steps. This chain is Porphobilinogen deaminase, found in Citrifermentans bemidjiense (strain ATCC BAA-1014 / DSM 16622 / JCM 12645 / Bem) (Geobacter bemidjiensis).